Reading from the N-terminus, the 422-residue chain is Ribosomal RNA small subunit methyltransferase B (422 aa).

Residues 254–260 (CAAPGGK), Asp-277, Asp-303, and Asp-322 contribute to the S-adenosyl-L-methionine site. Cys-375 (nucleophile) is an active-site residue.

This sequence belongs to the class I-like SAM-binding methyltransferase superfamily. RsmB/NOP family.

The protein resides in the cytoplasm. The catalysed reaction is cytidine(967) in 16S rRNA + S-adenosyl-L-methionine = 5-methylcytidine(967) in 16S rRNA + S-adenosyl-L-homocysteine + H(+). In terms of biological role, specifically methylates the cytosine at position 967 (m5C967) of 16S rRNA. This Proteus mirabilis (strain HI4320) protein is Ribosomal RNA small subunit methyltransferase B.